Here is a 72-residue protein sequence, read N- to C-terminus: Translation initiation factor IF-1 2 (72 aa).

Residues 1–72 (MAKEDAIEVD…KRGRITYRMK (72 aa)) form the S1-like domain.

It belongs to the IF-1 family. Component of the 30S ribosomal translation pre-initiation complex which assembles on the 30S ribosome in the order IF-2 and IF-3, IF-1 and N-formylmethionyl-tRNA(fMet); mRNA recruitment can occur at any time during PIC assembly.

The protein localises to the cytoplasm. Functionally, one of the essential components for the initiation of protein synthesis. Stabilizes the binding of IF-2 and IF-3 on the 30S subunit to which N-formylmethionyl-tRNA(fMet) subsequently binds. Helps modulate mRNA selection, yielding the 30S pre-initiation complex (PIC). Upon addition of the 50S ribosomal subunit IF-1, IF-2 and IF-3 are released leaving the mature 70S translation initiation complex. This chain is Translation initiation factor IF-1 2, found in Nitratidesulfovibrio vulgaris (strain DP4) (Desulfovibrio vulgaris).